A 207-amino-acid chain; its full sequence is 5-nitrosalicylic acid 1,2-dioxygenase (207 aa).

Positions 85–151 (QLIHPGEEVT…GDKDTLMYVI (67 aa)) constitute a Cupin type-2 domain.

It carries out the reaction 5-nitrosalicylate + O2 = 2-oxo-3-(5-oxofuran-2-ylidene)propanoate + nitrite + H(+). Functionally, dioxygenase that catalyzes the cleavage of the aromatic ring of 5-nitrosalicylate (5NSA) without prior removal of the nitro group in biodegradation of 5-nitroanthranilate. The chain is 5-nitrosalicylic acid 1,2-dioxygenase (naaB) from Bradyrhizobium sp.